We begin with the raw amino-acid sequence, 100 residues long: Succinate dehydrogenase subunit 7B, mitochondrial (100 aa).

Residues 1-25 form a disordered region; that stretch reads MAFLLNNASISSHLRSSSSQKTGDA. Residues 1–32 constitute a mitochondrion transit peptide; that stretch reads MAFLLNNASISSHLRSSSSQKTGDALSISRRG. Low complexity predominate over residues 9–19; it reads SISSHLRSSSS.

Component of complex II composed of eight subunits in plants: four classical SDH subunits SDH1, SDH2, SDH3 and SDH4 (a flavoprotein (FP), an iron-sulfur protein (IP), and a cytochrome b composed of a large and a small subunit.), as well as four subunits unknown in mitochondria from bacteria and heterotrophic eukaryotes.

Its subcellular location is the mitochondrion inner membrane. It participates in carbohydrate metabolism; tricarboxylic acid cycle. This is Succinate dehydrogenase subunit 7B, mitochondrial from Arabidopsis thaliana (Mouse-ear cress).